A 350-amino-acid chain; its full sequence is Melatonin receptor type 1A (350 aa).

Residues 1-29 lie on the Extracellular side of the membrane; sequence MQGNGSALPNASQPVLRGDGARPSWLASA. Residues Asn-4 and Asn-10 are each glycosylated (N-linked (GlcNAc...) asparagine). A helical transmembrane segment spans residues 30–50; that stretch reads LACVLIFTIVVDILGNLLVIL. At 51 to 63 the chain is on the cytoplasmic side; it reads SVYRNKKLRNAGN. A helical transmembrane segment spans residues 64–84; sequence IFVVSLAVADLVVAIYPYPLV. Residues 85 to 102 lie on the Extracellular side of the membrane; that stretch reads LMSIFNNGWNLGYLHCQV. The cysteines at positions 100 and 177 are disulfide-linked. A helical transmembrane segment spans residues 103-123; that stretch reads SGFLMGLSVIGSIFNITGIAI. The Cytoplasmic segment spans residues 124–142; it reads NRYCYICHSLKYDKLYSSK. The chain crosses the membrane as a helical span at residues 143–163; sequence NSLCYVLLIWLLTLAAVLPNL. Melatonin-binding residues include Asn-162 and Gln-181. The Extracellular segment spans residues 164–187; sequence RAGTLQYDPRIYSCTFAQSVSSAY. A helical transmembrane segment spans residues 188 to 208; that stretch reads TIAVVVFHFLVPMIIVIFCYL. The Cytoplasmic segment spans residues 209-240; it reads RIWILVLQVRQRVKPDRKPKLKPQDFRNFVTM. The helical transmembrane segment at 241–261 threads the bilayer; sequence FVVFVLFAICWAPLNFIGLAV. Topologically, residues 262–274 are extracellular; the sequence is ASDPASMVPRIPE. A helical transmembrane segment spans residues 275–295; it reads WLFVASYYMAYFNSCLNAIIY. The Cytoplasmic portion of the chain corresponds to 296 to 350; it reads GLLNQNFRKEYRRIIVSLCTARVFFVDSSNDVADRVKWKPSPLMTNNNVVKVDSV.

The protein belongs to the G-protein coupled receptor 1 family. As to expression, expressed in hypophyseal pars tuberalis and hypothalamic suprachiasmatic nuclei (SCN). Hippocampus.

The protein resides in the cell membrane. In terms of biological role, high affinity receptor for melatonin. Likely to mediate the reproductive and circadian actions of melatonin. The activity of this receptor is mediated by pertussis toxin sensitive G proteins that inhibit adenylate cyclase activity. Possibly involved in sleep induction, by melatonin activation of the potassium channel KCNMA1/BK and the dissociation of G-beta and G-gamma subunits, thereby decreasing synaptic transmission. In Homo sapiens (Human), this protein is Melatonin receptor type 1A (MTNR1A).